Reading from the N-terminus, the 130-residue chain is Protein BLT4 (130 aa).

Residues 1–25 (MARTAATKLALVPLVAAMLLVAADA) form the signal peptide. Residues 80–130 (VPARTTPAGPQASPPGAASASPTRSAPVSTALRSTDRTRAPHISSDRRLVG) form a disordered region. Residues 84 to 110 (TTPAGPQASPPGAASASPTRSAPVSTA) show a composition bias toward low complexity. Residues 113–130 (STDRTRAPHISSDRRLVG) are compositionally biased toward basic and acidic residues.

It belongs to the plant LTP family. As to expression, shoot meristem.

In terms of biological role, possible dehydrative stress responsive protein. Not shown to have lipid transfer activity. The sequence is that of Protein BLT4 (BLT4) from Hordeum vulgare (Barley).